Here is a 341-residue protein sequence, read N- to C-terminus: Large ribosomal subunit protein uL10 (341 aa).

The disordered stretch occupies residues 301 to 341; it reads EAAPAAAPAAEEKAEEEKKEEEEEKKEDQELSGLDSIFGGF.

This sequence belongs to the universal ribosomal protein uL10 family. Part of the 50S ribosomal subunit. Forms part of the ribosomal stalk which helps the ribosome interact with GTP-bound translation factors. Forms a heptameric L10(L12)2(L12)2(L12)2 complex, where L10 forms an elongated spine to which the L12 dimers bind in a sequential fashion.

In terms of biological role, forms part of the ribosomal stalk, playing a central role in the interaction of the ribosome with GTP-bound translation factors. This Aeropyrum pernix (strain ATCC 700893 / DSM 11879 / JCM 9820 / NBRC 100138 / K1) protein is Large ribosomal subunit protein uL10.